Consider the following 343-residue polypeptide: Ribosomal RNA small subunit methyltransferase C (343 aa).

It belongs to the methyltransferase superfamily. RsmC family. As to quaternary structure, monomer.

It is found in the cytoplasm. It catalyses the reaction guanosine(1207) in 16S rRNA + S-adenosyl-L-methionine = N(2)-methylguanosine(1207) in 16S rRNA + S-adenosyl-L-homocysteine + H(+). Functionally, specifically methylates the guanine in position 1207 of 16S rRNA in the 30S particle. This Escherichia coli O6:K15:H31 (strain 536 / UPEC) protein is Ribosomal RNA small subunit methyltransferase C.